Consider the following 406-residue polypeptide: Tyrosine--tRNA ligase (406 aa).

Tyr35 serves as a coordination point for L-tyrosine. Residues 40–49 (ATSTSLHIGH) carry the 'HIGH' region motif. Positions 166 and 170 each coordinate L-tyrosine. A 'KMSKS' region motif is present at residues 226 to 230 (KMGKS). Lys229 serves as a coordination point for ATP. One can recognise an S4 RNA-binding domain in the interval 341–405 (ILLVDLMVSS…IGKKKILRII (65 aa)).

It belongs to the class-I aminoacyl-tRNA synthetase family. TyrS type 1 subfamily. In terms of assembly, homodimer.

It is found in the cytoplasm. The catalysed reaction is tRNA(Tyr) + L-tyrosine + ATP = L-tyrosyl-tRNA(Tyr) + AMP + diphosphate + H(+). Its function is as follows. Catalyzes the attachment of tyrosine to tRNA(Tyr) in a two-step reaction: tyrosine is first activated by ATP to form Tyr-AMP and then transferred to the acceptor end of tRNA(Tyr). This is Tyrosine--tRNA ligase from Borrelia hermsii (strain HS1 / DAH).